The following is a 102-amino-acid chain: Small integral membrane protein 29 (102 aa).

Residue asparagine 3 is glycosylated (N-linked (GlcNAc...) asparagine). The chain crosses the membrane as a helical span at residues 21-41 (VLGPFFLITLVGVVVAVVMYV).

Expressed in spleen, thymus, prostate, testis, uterus, small intestine, colon and peripheral blood leukocytes.

The protein localises to the membrane. This chain is Small integral membrane protein 29, found in Homo sapiens (Human).